A 154-amino-acid chain; its full sequence is RING finger protein 11 (154 aa).

Residues 1 to 12 show a composition bias toward polar residues; sequence MGNCLKSPTSDD. Positions 1–52 are disordered; the sequence is MGNCLKSPTSDDISLLHESQSDRASFGEGTEPDQEPPPPYQEQVPVPIYHPT. A lipid anchor (N-myristoyl glycine) is attached at glycine 2. Cysteine 4 carries the S-palmitoyl cysteine lipid modification. Serine 14 and serine 25 each carry phosphoserine. The short motif at 37 to 40 is the PPxY motif element; sequence PPPY. The segment at 99 to 140 adopts an RING-type zinc-finger fold; sequence CVICMMDFVYGDPIRFLPCMHIYHLDCIDDWLMRSFTCPSCM. Position 135 is a phosphothreonine; by PKB/AKT1 (threonine 135).

Interacts (when phosphorylated) with 14-3-3. Interacts with the E3 ubiquitin-ligases NEDD4, ITCH, SMURF2 and WWP1. Also interacts with the E2 ubiquitin-conjugating enzymes UBE2D1 and UBE2N, but neither with CDC34, nor with UBE2L3. Interacts with ZNF350, EPS15 and STAMBP. After TNF stimulation, interacts with TAX1BP1, TNFAIP3 and RIPK1; these interactions are transient and they are lost after 1 hour of stimulation with TNF. Interacts with GGA1. Post-translationally, ubiquitinated in the presence of ITCH, SMURF2 and UBE2D1, as well as WWP1. In terms of processing, phosphorylation by PKB/AKT1 may accelerate degradation by the proteasome. Acylation at both Gly-2 and Cys-4 is required for proper localization to the endosomes.

It localises to the early endosome. Its subcellular location is the recycling endosome. The protein resides in the cytoplasm. The protein localises to the nucleus. In terms of biological role, essential component of a ubiquitin-editing protein complex, comprising also TNFAIP3, ITCH and TAX1BP1, that ensures the transient nature of inflammatory signaling pathways. Promotes the association of TNFAIP3 to RIPK1 after TNF stimulation. TNFAIP3 deubiquitinates 'Lys-63' polyubiquitin chains on RIPK1 and catalyzes the formation of 'Lys-48'-polyubiquitin chains. This leads to RIPK1 proteasomal degradation and consequently termination of the TNF- or LPS-mediated activation of NF-kappa-B. Recruits STAMBP to the E3 ubiquitin-ligase SMURF2 for ubiquitination, leading to its degradation by the 26S proteasome. The protein is RING finger protein 11 (Rnf11) of Mus musculus (Mouse).